The primary structure comprises 310 residues: Probable manganese-dependent inorganic pyrophosphatase (310 aa).

Mn(2+) is bound by residues H9, D13, D15, D76, H98, and D150.

The protein belongs to the PPase class C family. Requires Mn(2+) as cofactor.

The protein resides in the cytoplasm. It carries out the reaction diphosphate + H2O = 2 phosphate + H(+). The polypeptide is Probable manganese-dependent inorganic pyrophosphatase (Streptococcus thermophilus (strain ATCC BAA-491 / LMD-9)).